We begin with the raw amino-acid sequence, 580 residues long: uncharacterized protein (580 aa).

This is an uncharacterized protein from Methanocaldococcus jannaschii (strain ATCC 43067 / DSM 2661 / JAL-1 / JCM 10045 / NBRC 100440) (Methanococcus jannaschii).